Here is a 155-residue protein sequence, read N- to C-terminus: uncharacterized protein (155 aa).

Disordered regions lie at residues Met1–Phe22 and Asn110–Ala155. An N-acetylserine modification is found at Ser2. Ser136, Ser144, and Ser146 each carry phosphoserine. Acidic residues predominate over residues Ser136–Ala155.

This is an uncharacterized protein from Mus musculus (Mouse).